Consider the following 347-residue polypeptide: NADH-ubiquinone oxidoreductase chain 2 (347 aa).

11 consecutive transmembrane segments (helical) span residues 1-21 (MNPLILIILLTTLILGTMMVV), 25-45 (HWLLAWIGFEMNMMAFIPIMM), 59-79 (YLLTQATASALLMMAVIINLM), 96-116 (TLMTVALAIKLGLAPFHFWVP), 122-142 (IPLTTGLILLTWQKLAPLSIL), 149-169 (INLHLMLIMSLLSILMGGWGG), 178-198 (IMAYSSIAHMGWMTAILLYNP), 200-220 (LTLLNLLIYITMTFTMFMLFI), 237-257 (MPVITTLTMLTLLSMGGLPPL), 274-294 (DMLIVPTFMAITALLNLYFYM), and 325-345 (LLPTAIVISTMLLPLTPMLSI).

It belongs to the complex I subunit 2 family. As to quaternary structure, core subunit of respiratory chain NADH dehydrogenase (Complex I) which is composed of 45 different subunits. Interacts with TMEM242.

It is found in the mitochondrion inner membrane. It catalyses the reaction a ubiquinone + NADH + 5 H(+)(in) = a ubiquinol + NAD(+) + 4 H(+)(out). Functionally, core subunit of the mitochondrial membrane respiratory chain NADH dehydrogenase (Complex I) which catalyzes electron transfer from NADH through the respiratory chain, using ubiquinone as an electron acceptor. Essential for the catalytic activity and assembly of complex I. In Balaenoptera physalus (Fin whale), this protein is NADH-ubiquinone oxidoreductase chain 2.